We begin with the raw amino-acid sequence, 206 residues long: Small ribosomal subunit protein uS4A (206 aa).

In terms of domain architecture, S4 RNA-binding spans leucine 98–proline 164.

The protein belongs to the universal ribosomal protein uS4 family. As to quaternary structure, part of the 30S ribosomal subunit. Contacts protein S5. The interaction surface between S4 and S5 is involved in control of translational fidelity.

Functionally, one of the primary rRNA binding proteins, it binds directly to 16S rRNA where it nucleates assembly of the body of the 30S subunit. With S5 and S12 plays an important role in translational accuracy. The polypeptide is Small ribosomal subunit protein uS4A (rspD1) (Clostridium acetobutylicum (strain ATCC 824 / DSM 792 / JCM 1419 / IAM 19013 / LMG 5710 / NBRC 13948 / NRRL B-527 / VKM B-1787 / 2291 / W)).